A 507-amino-acid chain; its full sequence is Light-independent protochlorophyllide reductase subunit B (507 aa).

A [4Fe-4S] cluster-binding site is contributed by Asp-36. Asp-293 functions as the Proton donor in the catalytic mechanism. Position 428–429 (428–429 (GM)) interacts with substrate.

It belongs to the ChlB/BchB/BchZ family. Protochlorophyllide reductase is composed of three subunits; ChlL, ChlN and ChlB. Forms a heterotetramer of two ChlB and two ChlN subunits. Requires [4Fe-4S] cluster as cofactor.

The protein resides in the plastid. The protein localises to the chloroplast. It catalyses the reaction chlorophyllide a + oxidized 2[4Fe-4S]-[ferredoxin] + 2 ADP + 2 phosphate = protochlorophyllide a + reduced 2[4Fe-4S]-[ferredoxin] + 2 ATP + 2 H2O. The protein operates within porphyrin-containing compound metabolism; chlorophyll biosynthesis (light-independent). Component of the dark-operative protochlorophyllide reductase (DPOR) that uses Mg-ATP and reduced ferredoxin to reduce ring D of protochlorophyllide (Pchlide) to form chlorophyllide a (Chlide). This reaction is light-independent. The NB-protein (ChlN-ChlB) is the catalytic component of the complex. The sequence is that of Light-independent protochlorophyllide reductase subunit B from Porphyra purpurea (Red seaweed).